A 636-amino-acid chain; its full sequence is Threonine--tRNA ligase (636 aa).

The TGS domain maps to 1–61 (MLKITLKDGS…NENCEVEILS (61 aa)). Residues 244–534 (EHRKLGKELD…LIEHYEGKFP (291 aa)) form a catalytic region. Zn(2+)-binding residues include Cys335, His386, and His511.

The protein belongs to the class-II aminoacyl-tRNA synthetase family. As to quaternary structure, homodimer. Requires Zn(2+) as cofactor.

Its subcellular location is the cytoplasm. It carries out the reaction tRNA(Thr) + L-threonine + ATP = L-threonyl-tRNA(Thr) + AMP + diphosphate + H(+). Its function is as follows. Catalyzes the attachment of threonine to tRNA(Thr) in a two-step reaction: L-threonine is first activated by ATP to form Thr-AMP and then transferred to the acceptor end of tRNA(Thr). Also edits incorrectly charged L-seryl-tRNA(Thr). In Natranaerobius thermophilus (strain ATCC BAA-1301 / DSM 18059 / JW/NM-WN-LF), this protein is Threonine--tRNA ligase.